The following is a 311-amino-acid chain: 4-hydroxy-tetrahydrodipicolinate synthase (311 aa).

Thr49 contacts pyruvate. The active-site Proton donor/acceptor is the Tyr138. The active-site Schiff-base intermediate with substrate is Lys166. Pyruvate is bound at residue Ile207.

It belongs to the DapA family. In terms of assembly, homotetramer; dimer of dimers.

The protein localises to the cytoplasm. It carries out the reaction L-aspartate 4-semialdehyde + pyruvate = (2S,4S)-4-hydroxy-2,3,4,5-tetrahydrodipicolinate + H2O + H(+). Its pathway is amino-acid biosynthesis; L-lysine biosynthesis via DAP pathway; (S)-tetrahydrodipicolinate from L-aspartate: step 3/4. Functionally, catalyzes the condensation of (S)-aspartate-beta-semialdehyde [(S)-ASA] and pyruvate to 4-hydroxy-tetrahydrodipicolinate (HTPA). This Limosilactobacillus fermentum (strain NBRC 3956 / LMG 18251) (Lactobacillus fermentum) protein is 4-hydroxy-tetrahydrodipicolinate synthase.